The chain runs to 183 residues: tRNA-splicing endonuclease (183 aa).

Active-site residues include Y120, H128, and K159.

The protein belongs to the tRNA-intron endonuclease family. Archaeal short subfamily. As to quaternary structure, homotetramer; although the tetramer contains four active sites, only two participate in the cleavage. Therefore, it should be considered as a dimer of dimers.

It carries out the reaction pretRNA = a 3'-half-tRNA molecule with a 5'-OH end + a 5'-half-tRNA molecule with a 2',3'-cyclic phosphate end + an intron with a 2',3'-cyclic phosphate and a 5'-hydroxyl terminus.. In terms of biological role, endonuclease that removes tRNA introns. Cleaves pre-tRNA at the 5'- and 3'-splice sites to release the intron. The products are an intron and two tRNA half-molecules bearing 2',3' cyclic phosphate and 5'-OH termini. Recognizes a pseudosymmetric substrate in which 2 bulged loops of 3 bases are separated by a stem of 4 bp. This is tRNA-splicing endonuclease from Pyrobaculum aerophilum (strain ATCC 51768 / DSM 7523 / JCM 9630 / CIP 104966 / NBRC 100827 / IM2).